Consider the following 402-residue polypeptide: Protein FAM221B (402 aa).

The segment covering 1–35 (MEAHEIIEEPHITMDAEKHPPSKDPSAEDLQENHI) has biased composition (basic and acidic residues). Disordered regions lie at residues 1-205 (MEAH…TARP) and 378-402 (DTQKTRQRGGRPRGTDTVSNWHRPL). Polar residues-rich tracts occupy residues 77 to 90 (EPSISETPSETPTY) and 393 to 402 (DTVSNWHRPL).

Belongs to the FAM221 family.

This Homo sapiens (Human) protein is Protein FAM221B (FAM221B).